Here is a 540-residue protein sequence, read N- to C-terminus: Glucose-6-phosphate isomerase (540 aa).

The active-site Proton donor is the glutamate 350. Active-site residues include histidine 381 and lysine 503.

The protein belongs to the GPI family.

It localises to the cytoplasm. The catalysed reaction is alpha-D-glucose 6-phosphate = beta-D-fructose 6-phosphate. The protein operates within carbohydrate biosynthesis; gluconeogenesis. It participates in carbohydrate degradation; glycolysis; D-glyceraldehyde 3-phosphate and glycerone phosphate from D-glucose: step 2/4. In terms of biological role, catalyzes the reversible isomerization of glucose-6-phosphate to fructose-6-phosphate. This chain is Glucose-6-phosphate isomerase, found in Paraburkholderia phytofirmans (strain DSM 17436 / LMG 22146 / PsJN) (Burkholderia phytofirmans).